Here is a 505-residue protein sequence, read N- to C-terminus: Deoxyguanosinetriphosphate triphosphohydrolase (505 aa).

Positions 66–273 (RLTHSLEVQQ…MEAADDISYC (208 aa)) constitute an HD domain.

It belongs to the dGTPase family. Type 1 subfamily. As to quaternary structure, homotetramer. Requires Mg(2+) as cofactor.

It carries out the reaction dGTP + H2O = 2'-deoxyguanosine + triphosphate + H(+). Functionally, dGTPase preferentially hydrolyzes dGTP over the other canonical NTPs. This chain is Deoxyguanosinetriphosphate triphosphohydrolase, found in Escherichia fergusonii (strain ATCC 35469 / DSM 13698 / CCUG 18766 / IAM 14443 / JCM 21226 / LMG 7866 / NBRC 102419 / NCTC 12128 / CDC 0568-73).